Here is a 317-residue protein sequence, read N- to C-terminus: Beta-ketoacyl-[acyl-carrier-protein] synthase III (317 aa).

Catalysis depends on residues Cys-112 and His-244. The segment at 245–249 (QANLR) is ACP-binding. Asn-274 is a catalytic residue.

Belongs to the thiolase-like superfamily. FabH family. Homodimer.

Its subcellular location is the cytoplasm. It carries out the reaction malonyl-[ACP] + acetyl-CoA + H(+) = 3-oxobutanoyl-[ACP] + CO2 + CoA. It participates in lipid metabolism; fatty acid biosynthesis. Its function is as follows. Catalyzes the condensation reaction of fatty acid synthesis by the addition to an acyl acceptor of two carbons from malonyl-ACP. Catalyzes the first condensation reaction which initiates fatty acid synthesis and may therefore play a role in governing the total rate of fatty acid production. Possesses both acetoacetyl-ACP synthase and acetyl transacylase activities. Its substrate specificity determines the biosynthesis of branched-chain and/or straight-chain of fatty acids. The polypeptide is Beta-ketoacyl-[acyl-carrier-protein] synthase III (Aliivibrio fischeri (strain ATCC 700601 / ES114) (Vibrio fischeri)).